We begin with the raw amino-acid sequence, 372 residues long: Chorismate synthase (372 aa).

Residues R48 and R54 each coordinate NADP(+). Residues R125 to S127, N238 to A239, G278, K293 to S297, and R319 each bind FMN.

The protein belongs to the chorismate synthase family. As to quaternary structure, homotetramer. It depends on FMNH2 as a cofactor.

It catalyses the reaction 5-O-(1-carboxyvinyl)-3-phosphoshikimate = chorismate + phosphate. Its pathway is metabolic intermediate biosynthesis; chorismate biosynthesis; chorismate from D-erythrose 4-phosphate and phosphoenolpyruvate: step 7/7. Its function is as follows. Catalyzes the anti-1,4-elimination of the C-3 phosphate and the C-6 proR hydrogen from 5-enolpyruvylshikimate-3-phosphate (EPSP) to yield chorismate, which is the branch point compound that serves as the starting substrate for the three terminal pathways of aromatic amino acid biosynthesis. This reaction introduces a second double bond into the aromatic ring system. In Xylella fastidiosa (strain M23), this protein is Chorismate synthase.